Consider the following 901-residue polypeptide: Protein translocase subunit SecA (901 aa).

ATP is bound by residues glutamine 87, 105-109, and aspartate 512; that span reads GEGKT. Positions 885, 887, 896, and 897 each coordinate Zn(2+).

The protein belongs to the SecA family. Monomer and homodimer. Part of the essential Sec protein translocation apparatus which comprises SecA, SecYEG and auxiliary proteins SecDF-YajC and YidC. Zn(2+) serves as cofactor.

Its subcellular location is the cell inner membrane. The protein resides in the cytoplasm. It carries out the reaction ATP + H2O + cellular proteinSide 1 = ADP + phosphate + cellular proteinSide 2.. Its function is as follows. Part of the Sec protein translocase complex. Interacts with the SecYEG preprotein conducting channel. Has a central role in coupling the hydrolysis of ATP to the transfer of proteins into and across the cell membrane, serving both as a receptor for the preprotein-SecB complex and as an ATP-driven molecular motor driving the stepwise translocation of polypeptide chains across the membrane. This Salmonella schwarzengrund (strain CVM19633) protein is Protein translocase subunit SecA.